We begin with the raw amino-acid sequence, 173 residues long: Skp-like protein (173 aa).

The first 19 residues, methionine 1 to alanine 19, serve as a signal peptide directing secretion.

Belongs to the Skp family.

The chain is Skp-like protein from Chlamydia muridarum (strain MoPn / Nigg).